The sequence spans 602 residues: ATP-dependent lipid A-core flippase 1 (602 aa).

5 helical membrane-spanning segments follow: residues 36 to 56 (LGFV…VYFL), 80 to 100 (LFII…NYCL), 154 to 174 (ILTI…MFYY), 176 to 196 (WQLS…VSVV), and 261 to 281 (ASVP…FYAI). The region spanning 39 to 321 (VAAIIGMLGY…LTNVNSEFQQ (283 aa)) is the ABC transmembrane type-1 domain. The ABC transporter domain occupies 362 to 599 (YKNTNTMTTS…QGAYAQLHSF (238 aa)). 398–405 (GRSGSGKS) is an ATP binding site.

It belongs to the ABC transporter superfamily. Lipid exporter (TC 3.A.1.106) family. As to quaternary structure, homodimer.

The protein resides in the cell inner membrane. It carries out the reaction ATP + H2O + lipid A-core oligosaccharideSide 1 = ADP + phosphate + lipid A-core oligosaccharideSide 2.. Functionally, involved in lipopolysaccharide (LPS) biosynthesis. Translocates lipid A-core from the inner to the outer leaflet of the inner membrane. Transmembrane domains (TMD) form a pore in the inner membrane and the ATP-binding domain (NBD) is responsible for energy generation. The sequence is that of ATP-dependent lipid A-core flippase 1 from Colwellia psychrerythraea (strain 34H / ATCC BAA-681) (Vibrio psychroerythus).